The sequence spans 285 residues: Bifunctional protein FolD (285 aa).

Residue 166-168 participates in NADP(+) binding; it reads GAS.

It belongs to the tetrahydrofolate dehydrogenase/cyclohydrolase family. As to quaternary structure, homodimer.

The enzyme catalyses (6R)-5,10-methylene-5,6,7,8-tetrahydrofolate + NADP(+) = (6R)-5,10-methenyltetrahydrofolate + NADPH. The catalysed reaction is (6R)-5,10-methenyltetrahydrofolate + H2O = (6R)-10-formyltetrahydrofolate + H(+). It participates in one-carbon metabolism; tetrahydrofolate interconversion. Catalyzes the oxidation of 5,10-methylenetetrahydrofolate to 5,10-methenyltetrahydrofolate and then the hydrolysis of 5,10-methenyltetrahydrofolate to 10-formyltetrahydrofolate. This chain is Bifunctional protein FolD, found in Thioalkalivibrio sulfidiphilus (strain HL-EbGR7).